The sequence spans 388 residues: Succinate--CoA ligase [ADP-forming] subunit beta (388 aa).

The ATP-grasp domain occupies 9–244 (KQLFREYGLP…TTQDDEREMH (236 aa)). ATP contacts are provided by residues K46, 53–55 (GRG), E99, S102, and E107. Residues N199 and D213 each coordinate Mg(2+). Residues N264 and 321–323 (GIV) contribute to the substrate site.

The protein belongs to the succinate/malate CoA ligase beta subunit family. Heterotetramer of two alpha and two beta subunits. The cofactor is Mg(2+).

The catalysed reaction is succinate + ATP + CoA = succinyl-CoA + ADP + phosphate. It carries out the reaction GTP + succinate + CoA = succinyl-CoA + GDP + phosphate. The protein operates within carbohydrate metabolism; tricarboxylic acid cycle; succinate from succinyl-CoA (ligase route): step 1/1. Functionally, succinyl-CoA synthetase functions in the citric acid cycle (TCA), coupling the hydrolysis of succinyl-CoA to the synthesis of either ATP or GTP and thus represents the only step of substrate-level phosphorylation in the TCA. The beta subunit provides nucleotide specificity of the enzyme and binds the substrate succinate, while the binding sites for coenzyme A and phosphate are found in the alpha subunit. In Psychromonas ingrahamii (strain DSM 17664 / CCUG 51855 / 37), this protein is Succinate--CoA ligase [ADP-forming] subunit beta.